We begin with the raw amino-acid sequence, 466 residues long: Fez family zinc finger protein 1 (466 aa).

The Engrailed homology 1 repressor signature appears at 34–49 (PLAFSIERIMSRTPEP). C2H2-type zinc fingers lie at residues 261–283 (FTCE…MPVH), 289–311 (FVCK…KIIH), 317–339 (HKCN…TRIH), 345–367 (FVCE…KLTH), 373–395 (FKCN…MHTH), and 401–424 (FTCP…RKLH). Residues 446-466 (LPNREQSHTIIQSPQLQKSVY) form a disordered region. Polar residues predominate over residues 453–466 (HTIIQSPQLQKSVY).

The protein belongs to the krueppel C2H2-type zinc-finger protein family.

It localises to the nucleus. In terms of biological role, transcription repressor. Involved in the development of the forebrain region. The chain is Fez family zinc finger protein 1 (fezf1) from Xenopus laevis (African clawed frog).